The sequence spans 886 residues: 3',5'-cyclic-AMP phosphodiesterase 4A (886 aa).

The segment at 1–128 (MEPPTVPSER…GRSPLDSQAS (128 aa)) is disordered. A Phosphoserine modification is found at serine 13. Residues 36–46 (QPRTPIRIQQR) are compositionally biased toward low complexity. Positions 51–78 (SAERAERERQPHRPIERADAMDTSDRPG) are enriched in basic and acidic residues. Residues 93–104 (TGTGSGGAGGGS) are compositionally biased toward gly residues. Residues glycine 119 and leucine 123 each carry the phosphoserine modification. Serine 152 carries the post-translational modification Phosphoserine; by MAPKAPK2. 3 positions are modified to phosphoserine: serine 157, serine 165, and serine 209. Positions 294–331 (KQNEVEIPSPTMKEREKQQAPRPRPSQPPPPPVPHLQP) are disordered. Pro residues predominate over residues 315–328 (RPRPSQPPPPPVPH). Serine 346 bears the Phosphoserine mark. A PDEase domain is found at 357–686 (VKTDQEELLA…DWYYSAIRQS (330 aa)). Residue lysine 358 forms a Glycyl lysine isopeptide (Lys-Gly) (interchain with G-Cter in SUMO) linkage. Residue histidine 433 is the Proton donor of the active site. Histidine 433 serves as a coordination point for 3',5'-cyclic AMP. Histidine 433 and histidine 437 together coordinate AMP. Zn(2+)-binding residues include histidine 437, histidine 473, aspartate 474, and aspartate 591. Positions 474, 591, 642, and 645 each coordinate AMP. Aspartate 474 is a binding site for Mg(2+). Position 474 (aspartate 474) interacts with Mn(2+). Residues glutamine 642 and phenylalanine 645 each contribute to the 3',5'-cyclic AMP site. Disordered stretches follow at residues 682–705 (AIRQ…PLPD) and 866–886 (FGED…GDPT). Residues serine 686 and serine 688 each carry the phosphoserine modification. A compositionally biased stretch (gly residues) spans 876–886 (PGGGGSGGDPT).

Belongs to the cyclic nucleotide phosphodiesterase family. PDE4 subfamily. Interacts with LYN (via SH3 domain). Interacts with ARRB2. The cofactor is Zn(2+). Mg(2+) serves as cofactor. Mn(2+) is required as a cofactor. Proteolytically cleaved by CASP3. Post-translationally, phosphorylated at Ser-119 by PKA. Expressed in lymphoid cell subsets including CD8-positive T cells and T-helper 2 cells. Expressed in dendritic cells. In terms of tissue distribution, highly expressed in liver, stomach, testis, thyroid and adrenal glands and at a lower extent in placenta, kidney, pancreas, ovary, uterus and skin. Expressed in myeloid cell subsets including dendritic cells, monocytes, macrophages, eosinophils and mast cells. Expressed in natural killer cells. Expressed in bronchial smooth muscle. As to expression, expressed at high levels in the heart and small intestine. It is also found in the brain, kidney, spleen, colon, salivary gland, ovary and peripheral blood lymphocytes. Expressed predominantly in skeletal muscle and brain and at lower levels in the testis. Found in specific neuronal subpopulations including cortical pyramidal neurons, horn neurons in the spinal cord and Purkinje cells in cerebellum (at protein level).

Its subcellular location is the cytoplasm. It localises to the perinuclear region. The protein localises to the cell projection. It is found in the ruffle membrane. The protein resides in the cytosol. Its subcellular location is the membrane. The catalysed reaction is 3',5'-cyclic AMP + H2O = AMP + H(+). It participates in purine metabolism; 3',5'-cyclic AMP degradation; AMP from 3',5'-cyclic AMP: step 1/1. Inhibited by rolipram, cilomilast, Ro 20-1724, roflumilast and denbufylline. Its activity is regulated as follows. Inhibited by rolipram. With respect to regulation, inhibited by rolipram and cilomilast. In terms of biological role, hydrolyzes the second messenger 3',5'-cyclic AMP (cAMP), which is a key regulator of many important physiological processes. Efficiently hydrolyzes cAMP. Its function is as follows. Efficiently hydrolyzes cAMP. The phosphodiesterase activity is not affected by calcium, calmodulin or cyclic GMP (cGMP) levels. Does not hydrolyze cGMP. The chain is 3',5'-cyclic-AMP phosphodiesterase 4A (PDE4A) from Homo sapiens (Human).